The sequence spans 1129 residues: Inositol hexakisphosphate and diphosphoinositol-pentakisphosphate kinase 2 (1129 aa).

Residue S44 is modified to Phosphoserine. Residue 59–60 participates in substrate binding; that stretch reads KK. The ATP site is built by R140, K193, H200, and R219. 219–220 provides a ligand contact to substrate; that stretch reads RK. S229 carries the phosphoserine modification. Residues 243 to 246 and 252 to 254 contribute to the ATP site; these read EEFM and DVK. 2 residues coordinate substrate: K254 and R268. ATP-binding positions include S270, D315, and 327 to 329; that span reads DVN. Substrate is bound at residue 332 to 335; the sequence is SFVK. Positions 377–448 are polyphosphoinositide-binding domain; the sequence is PTTSGTMMEL…VLDIARQLLM (72 aa). The segment at 904–945 is disordered; it reads KGCEEDKNLPSGYGYRPASRENEGRRSLKTDDDEPHTSKRDE. Basic and acidic residues predominate over residues 921–945; it reads ASRENEGRRSLKTDDDEPHTSKRDE. A phosphoserine mark is found at S1051, S1058, and S1066. Residues 1070-1129 form a disordered region; the sequence is YTPTKILPTPPAALKSSKASSKAAAGGPSQAMAPHTSSRKKSINSKTEGHEPKKSTGKKR. A compositionally biased stretch (low complexity) spans 1081-1098; the sequence is AALKSSKASSKAAAGGPS. Phosphoserine is present on residues S1106 and S1107.

The protein belongs to the histidine acid phosphatase family. VIP1 subfamily. Ubiquitously expressed. Expressed in the cochlear and vestibular sensory hair cells, supporting cells and spiral ganglion neurons.

The protein localises to the cytoplasm. The protein resides in the cytosol. The enzyme catalyses 1D-myo-inositol hexakisphosphate + ATP = 1-diphospho-1D-myo-inositol 2,3,4,5,6-pentakisphosphate + ADP. The catalysed reaction is 5-diphospho-1D-myo-inositol 1,2,3,4,6-pentakisphosphate + ATP + H(+) = 1,5-bis(diphospho)-1D-myo-inositol 2,3,4,6-tetrakisphosphate + ADP. Its function is as follows. Bifunctional inositol kinase that acts in concert with the IP6K kinases IP6K1, IP6K2 and IP6K3 to synthesize the diphosphate group-containing inositol pyrophosphates diphosphoinositol pentakisphosphate, PP-InsP5, and bis-diphosphoinositol tetrakisphosphate, (PP)2-InsP4. PP-InsP5 and (PP)2-InsP4, also respectively called InsP7 and InsP8, regulate a variety of cellular processes, including apoptosis, vesicle trafficking, cytoskeletal dynamics, exocytosis, insulin signaling and neutrophil activation. Phosphorylates inositol hexakisphosphate (InsP6) at position 1 to produce PP-InsP5 which is in turn phosphorylated by IP6Ks to produce (PP)2-InsP4. Alternatively, phosphorylates PP-InsP5 at position 1, produced by IP6Ks from InsP6, to produce (PP)2-InsP4. Required for normal hearing. This is Inositol hexakisphosphate and diphosphoinositol-pentakisphosphate kinase 2 from Mus musculus (Mouse).